We begin with the raw amino-acid sequence, 326 residues long: ELMO domain-containing protein 1 (326 aa).

Residues Q133–L306 form the ELMO domain.

Functionally, acts as a GTPase-activating protein (GAP) toward guanine nucleotide exchange factors like ARL2, ARL3, ARF1 and ARF6, but not for GTPases outside the Arf family. This is ELMO domain-containing protein 1 (Elmod1) from Mus musculus (Mouse).